The sequence spans 579 residues: 2-succinyl-5-enolpyruvyl-6-hydroxy-3-cyclohexene-1-carboxylate synthase (579 aa).

Belongs to the TPP enzyme family. MenD subfamily. Homodimer. Mg(2+) serves as cofactor. Mn(2+) is required as a cofactor. It depends on thiamine diphosphate as a cofactor.

The enzyme catalyses isochorismate + 2-oxoglutarate + H(+) = 5-enolpyruvoyl-6-hydroxy-2-succinyl-cyclohex-3-ene-1-carboxylate + CO2. It participates in quinol/quinone metabolism; 1,4-dihydroxy-2-naphthoate biosynthesis; 1,4-dihydroxy-2-naphthoate from chorismate: step 2/7. Its pathway is quinol/quinone metabolism; menaquinone biosynthesis. Catalyzes the thiamine diphosphate-dependent decarboxylation of 2-oxoglutarate and the subsequent addition of the resulting succinic semialdehyde-thiamine pyrophosphate anion to isochorismate to yield 2-succinyl-5-enolpyruvyl-6-hydroxy-3-cyclohexene-1-carboxylate (SEPHCHC). In Shewanella frigidimarina (strain NCIMB 400), this protein is 2-succinyl-5-enolpyruvyl-6-hydroxy-3-cyclohexene-1-carboxylate synthase.